Here is a 539-residue protein sequence, read N- to C-terminus: Netrin-G1 (539 aa).

Residues 1–28 (MYLSRFLSIHALWVTVSSVMQPYPLVWG) form the signal peptide. 3 disulfide bridges follow: Cys33-Cys50, Cys72-Cys92, and Cys80-Cys88. One can recognise a Laminin N-terminal domain in the interval 46 to 296 (DYMACQPEST…AISDIKVRGR (251 aa)). Residues 80 to 91 (CAMGNPYMCNNE) are NGL discriminant loop I. Residue Asn133 is glycosylated (N-linked (GlcNAc...) asparagine). Cysteines 182 and 206 form a disulfide. The NGL discriminant loop II stretch occupies residues 208 to 214 (EEYSTGY). An NGL discriminant loop III region spans residues 273-275 (EIF). 15 disulfide bridges follow: Cys297/Cys306, Cys299/Cys315, Cys317/Cys326, Cys329/Cys354, Cys364/Cys373, Cys366/Cys384, Cys387/Cys396, Cys399/Cys417, Cys420/Cys432, Cys422/Cys438, Cys440/Cys449, Cys452/Cys462, Cys467/Cys480, Cys474/Cys486, and Cys488/Cys497. 3 Laminin EGF-like domains span residues 297–356 (CKCN…TCIP), 364–419 (CECF…VCIE), and 420–469 (CYCN…VCDN). Asn320 is a glycosylation site (N-linked (GlcNAc...) asparagine). A glycan (N-linked (GlcNAc...) asparagine) is linked at Asn406. Residue Asn433 is glycosylated (N-linked (GlcNAc...) asparagine). Ser510 carries GPI-anchor amidated serine lipidation. The propeptide at 511-539 (DSGQGAPPHGSPALLLLTTLLGTASPLVF) is removed in mature form.

As to quaternary structure, interacts with NGL1. In terms of processing, N-glycosylated. In terms of tissue distribution, highly expressed in the thalamus, with very low expression, if any, in other tissues.

It localises to the cell membrane. Involved in controlling patterning and neuronal circuit formation at the laminar, cellular, subcellular and synaptic levels. Promotes neurite outgrowth of both axons and dendrites. This chain is Netrin-G1 (NTNG1), found in Homo sapiens (Human).